Here is a 31-residue protein sequence, read N- to C-terminus: Cyclotide vibi-H (31 aa).

The segment at residues 1–31 (GLLPCAESCVYIPCLTTVIGCSCKSKVCYKN) is a cross-link (cyclopeptide (Gly-Asn)). Disulfide bonds link Cys-5–Cys-21, Cys-9–Cys-23, and Cys-14–Cys-28.

Post-translationally, this is a cyclic peptide.

Probably participates in a plant defense mechanism. Has cytotoxic activity, active against a human lymphoma cell line with an IC(50) of 1.6 uM. This is Cyclotide vibi-H from Viola biflora (Yellow wood violet).